Consider the following 32-residue polypeptide: Dermaseptin-8 (32 aa).

A Glutamine amide modification is found at Gln-32.

As to expression, expressed by the skin glands.

It localises to the secreted. Antimicrobial peptide, active against the Gram-positive bacterium S.aureus, and the Gram-negative bacteriun E.coli. Has hemolytic activity at 432 uM. The chain is Dermaseptin-8 from Phyllomedusa tarsius (Brownbelly leaf frog).